The following is a 548-amino-acid chain: Acetamidase (548 aa).

Residues Lys-129 and Ser-204 each act as charge relay system in the active site. Ser-228 serves as the catalytic Acyl-ester intermediate.

The protein belongs to the amidase family.

It carries out the reaction a monocarboxylic acid amide + H2O = a monocarboxylate + NH4(+). The catalysed reaction is acetamide + H2O = acetate + NH4(+). In terms of biological role, allows acetamide to be used as a sole carbon or nitrogen source. The polypeptide is Acetamidase (amdS) (Emericella nidulans (strain FGSC A4 / ATCC 38163 / CBS 112.46 / NRRL 194 / M139) (Aspergillus nidulans)).